The sequence spans 419 residues: L-rhamnose isomerase (419 aa).

Residues His-262, Asp-294, and Asp-296 each coordinate Mn(2+).

The protein belongs to the rhamnose isomerase family. Homotetramer. The cofactor is Mn(2+).

The protein localises to the cytoplasm. The enzyme catalyses L-rhamnopyranose = L-rhamnulose. Its pathway is carbohydrate degradation; L-rhamnose degradation; glycerone phosphate from L-rhamnose: step 1/3. In terms of biological role, catalyzes the interconversion of L-rhamnose and L-rhamnulose. The protein is L-rhamnose isomerase of Salmonella newport (strain SL254).